Here is a 458-residue protein sequence, read N- to C-terminus: Adenylosuccinate synthetase (458 aa).

GTP contacts are provided by residues 17-23 (GDEGKGK) and 45-47 (GHT). Asp18 (proton acceptor) is an active-site residue. Asp18 and Gly45 together coordinate Mg(2+). IMP contacts are provided by residues 18–21 (DEGK), 43–46 (NAGH), Thr137, Arg151, Gln247, Thr262, and Arg330. His46 functions as the Proton donor in the catalytic mechanism. 326-332 (VTTGRSR) provides a ligand contact to substrate. GTP contacts are provided by residues Arg332, 358-360 (KLD), and 440-442 (STS).

Belongs to the adenylosuccinate synthetase family. In terms of assembly, homodimer. Mg(2+) serves as cofactor.

The protein localises to the cytoplasm. It catalyses the reaction IMP + L-aspartate + GTP = N(6)-(1,2-dicarboxyethyl)-AMP + GDP + phosphate + 2 H(+). It functions in the pathway purine metabolism; AMP biosynthesis via de novo pathway; AMP from IMP: step 1/2. Plays an important role in the de novo pathway of purine nucleotide biosynthesis. Catalyzes the first committed step in the biosynthesis of AMP from IMP. In Acidovorax ebreus (strain TPSY) (Diaphorobacter sp. (strain TPSY)), this protein is Adenylosuccinate synthetase.